Consider the following 113-residue polypeptide: Ribonuclease P protein component (113 aa).

This sequence belongs to the RnpA family. Consists of a catalytic RNA component (M1 or rnpB) and a protein subunit.

It catalyses the reaction Endonucleolytic cleavage of RNA, removing 5'-extranucleotides from tRNA precursor.. Functionally, RNaseP catalyzes the removal of the 5'-leader sequence from pre-tRNA to produce the mature 5'-terminus. It can also cleave other RNA substrates such as 4.5S RNA. The protein component plays an auxiliary but essential role in vivo by binding to the 5'-leader sequence and broadening the substrate specificity of the ribozyme. The sequence is that of Ribonuclease P protein component from Finegoldia magna (strain ATCC 29328 / DSM 20472 / WAL 2508) (Peptostreptococcus magnus).